The chain runs to 199 residues: Recombination protein RecR (199 aa).

The C4-type zinc finger occupies 56–71 (CRSCFNVAQSELCRIC). The region spanning 79–174 (ALICVVEEPK…RVTRLASGLP (96 aa)) is the Toprim domain.

Belongs to the RecR family.

May play a role in DNA repair. It seems to be involved in an RecBC-independent recombinational process of DNA repair. It may act with RecF and RecO. The chain is Recombination protein RecR from Frankia alni (strain DSM 45986 / CECT 9034 / ACN14a).